Consider the following 313-residue polypeptide: NAD-capped RNA hydrolase NudC (313 aa).

R111 is a substrate binding site. The region spanning 168-293 is the Nudix hydrolase domain; the sequence is PRIDPAVICL…DWSSASESKL (126 aa). 3 residues coordinate a divalent metal cation: A202, E218, and E222. A Nudix box motif is present at residues 203–224; that stretch reads GFVEAGESFEVCVAREIREEIG. Position 236-243 (236-243) interacts with substrate; the sequence is QQWPFPRS. E264 contacts a divalent metal cation.

It belongs to the Nudix hydrolase family. NudC subfamily. Homodimer. Mg(2+) serves as cofactor. It depends on Mn(2+) as a cofactor.

It catalyses the reaction a 5'-end NAD(+)-phospho-ribonucleoside in mRNA + H2O = a 5'-end phospho-adenosine-phospho-ribonucleoside in mRNA + beta-nicotinamide D-ribonucleotide + 2 H(+). The enzyme catalyses NAD(+) + H2O = beta-nicotinamide D-ribonucleotide + AMP + 2 H(+). The catalysed reaction is NADH + H2O = reduced beta-nicotinamide D-ribonucleotide + AMP + 2 H(+). Its function is as follows. mRNA decapping enzyme that specifically removes the nicotinamide adenine dinucleotide (NAD) cap from a subset of mRNAs by hydrolyzing the diphosphate linkage to produce nicotinamide mononucleotide (NMN) and 5' monophosphate mRNA. The NAD-cap is present at the 5'-end of some mRNAs and stabilizes RNA against 5'-processing. Has preference for mRNAs with a 5'-end purine. Catalyzes the hydrolysis of a broad range of dinucleotide pyrophosphates. This chain is NAD-capped RNA hydrolase NudC, found in Mycobacterium tuberculosis (strain ATCC 25177 / H37Ra).